A 957-amino-acid chain; its full sequence is Iron-responsive element-binding protein 2 (957 aa).

The [4Fe-4S] cluster site is built by cysteine 506, cysteine 572, and cysteine 575.

Belongs to the aconitase/IPM isomerase family. Requires [4Fe-4S] cluster as cofactor. In terms of processing, ubiquitinated and degraded by the proteasome in presence of high level of iron and oxygen.

Its subcellular location is the cytoplasm. Functionally, RNA-binding protein that binds to iron-responsive elements (IRES), which are stem-loop structures found in the 5'-UTR of ferritin, and delta aminolevulinic acid synthase mRNAs, and in the 3'-UTR of transferrin receptor mRNA. Binding to the IRE element in ferritin results in the repression of its mRNA translation. Binding of the protein to the transferrin receptor mRNA inhibits the degradation of this otherwise rapidly degraded mRNA. The sequence is that of Iron-responsive element-binding protein 2 (ireb2) from Xenopus tropicalis (Western clawed frog).